The chain runs to 322 residues: Ribosomal RNA small subunit methyltransferase H (322 aa).

S-adenosyl-L-methionine is bound by residues 34–36 (GGH), Asp-59, Phe-86, Asp-112, and Gln-119.

Belongs to the methyltransferase superfamily. RsmH family.

It localises to the cytoplasm. It catalyses the reaction cytidine(1402) in 16S rRNA + S-adenosyl-L-methionine = N(4)-methylcytidine(1402) in 16S rRNA + S-adenosyl-L-homocysteine + H(+). Specifically methylates the N4 position of cytidine in position 1402 (C1402) of 16S rRNA. The chain is Ribosomal RNA small subunit methyltransferase H from Chlorobium limicola (strain DSM 245 / NBRC 103803 / 6330).